Reading from the N-terminus, the 97-residue chain is Small ribosomal subunit protein bS20 (97 aa).

Belongs to the bacterial ribosomal protein bS20 family.

Its function is as follows. Binds directly to 16S ribosomal RNA. This Methylibium petroleiphilum (strain ATCC BAA-1232 / LMG 22953 / PM1) protein is Small ribosomal subunit protein bS20.